We begin with the raw amino-acid sequence, 340 residues long: Glyceraldehyde-3-phosphate dehydrogenase, cytosolic (340 aa).

NAD(+)-binding positions include 16–17 (RI), aspartate 38, and arginine 85. Residues 156–158 (SCT), threonine 187, 216–217 (TG), and arginine 239 each bind D-glyceraldehyde 3-phosphate. Cysteine 157 acts as the Nucleophile in catalysis. Asparagine 321 serves as a coordination point for NAD(+).

The protein belongs to the glyceraldehyde-3-phosphate dehydrogenase family. As to quaternary structure, homotetramer.

The protein localises to the cytoplasm. The enzyme catalyses D-glyceraldehyde 3-phosphate + phosphate + NAD(+) = (2R)-3-phospho-glyceroyl phosphate + NADH + H(+). Its pathway is carbohydrate degradation; glycolysis; pyruvate from D-glyceraldehyde 3-phosphate: step 1/5. In terms of biological role, key enzyme in glycolysis that catalyzes the first step of the pathway by converting D-glyceraldehyde 3-phosphate (G3P) into 3-phospho-D-glyceroyl phosphate. Essential for the maintenance of cellular ATP levels and carbohydrate metabolism. This Pinus sylvestris (Scotch pine) protein is Glyceraldehyde-3-phosphate dehydrogenase, cytosolic (GAPC).